We begin with the raw amino-acid sequence, 196 residues long: ATP synthase subunit b (196 aa).

The chain crosses the membrane as a helical span at residues 24–44; sequence PLSELLIGTLSFALLVAFFFW.

The protein belongs to the ATPase B chain family. F-type ATPases have 2 components, F(1) - the catalytic core - and F(0) - the membrane proton channel. F(1) has five subunits: alpha(3), beta(3), gamma(1), delta(1), epsilon(1). F(0) has three main subunits: a(1), b(2) and c(10-14). The alpha and beta chains form an alternating ring which encloses part of the gamma chain. F(1) is attached to F(0) by a central stalk formed by the gamma and epsilon chains, while a peripheral stalk is formed by the delta and b chains.

The protein localises to the cell membrane. Functionally, f(1)F(0) ATP synthase produces ATP from ADP in the presence of a proton or sodium gradient. F-type ATPases consist of two structural domains, F(1) containing the extramembraneous catalytic core and F(0) containing the membrane proton channel, linked together by a central stalk and a peripheral stalk. During catalysis, ATP synthesis in the catalytic domain of F(1) is coupled via a rotary mechanism of the central stalk subunits to proton translocation. Its function is as follows. Component of the F(0) channel, it forms part of the peripheral stalk, linking F(1) to F(0). In Frankia casuarinae (strain DSM 45818 / CECT 9043 / HFP020203 / CcI3), this protein is ATP synthase subunit b.